A 252-amino-acid chain; its full sequence is Trans-aconitate 2-methyltransferase (252 aa).

The protein belongs to the methyltransferase superfamily. Tam family.

It is found in the cytoplasm. The enzyme catalyses trans-aconitate + S-adenosyl-L-methionine = (E)-3-(methoxycarbonyl)pent-2-enedioate + S-adenosyl-L-homocysteine. In terms of biological role, catalyzes the S-adenosylmethionine monomethyl esterification of trans-aconitate. The chain is Trans-aconitate 2-methyltransferase from Escherichia coli (strain 55989 / EAEC).